A 1297-amino-acid chain; its full sequence is Phosphoribosylformylglycinamidine synthase (1297 aa).

The segment at 301-329 is disordered; the sequence is TAISPFPGAATGSGGEIRDEGATGRGAKP. 308 to 319 contributes to the ATP binding site; sequence GAATGSGGEIRD. Residues aspartate 680, glutamate 719, asparagine 723, and aspartate 887 each coordinate Mg(2+). Serine 889 is an ATP binding site. In terms of domain architecture, Glutamine amidotransferase type-1 spans 1045–1297; that stretch reads IAILREQGVN…RLFRNARMVF (253 aa). Cysteine 1138 functions as the Nucleophile in the catalytic mechanism. Catalysis depends on residues histidine 1263 and glutamate 1265.

This sequence in the N-terminal section; belongs to the FGAMS family. Monomer.

The protein resides in the cytoplasm. The enzyme catalyses N(2)-formyl-N(1)-(5-phospho-beta-D-ribosyl)glycinamide + L-glutamine + ATP + H2O = 2-formamido-N(1)-(5-O-phospho-beta-D-ribosyl)acetamidine + L-glutamate + ADP + phosphate + H(+). Its pathway is purine metabolism; IMP biosynthesis via de novo pathway; 5-amino-1-(5-phospho-D-ribosyl)imidazole from N(2)-formyl-N(1)-(5-phospho-D-ribosyl)glycinamide: step 1/2. Its function is as follows. Phosphoribosylformylglycinamidine synthase involved in the purines biosynthetic pathway. Catalyzes the ATP-dependent conversion of formylglycinamide ribonucleotide (FGAR) and glutamine to yield formylglycinamidine ribonucleotide (FGAM) and glutamate. The protein is Phosphoribosylformylglycinamidine synthase of Haemophilus influenzae (strain ATCC 51907 / DSM 11121 / KW20 / Rd).